A 192-amino-acid polypeptide reads, in one-letter code: Epididymal-specific lipocalin-5 (192 aa).

The N-terminal stretch at 1–26 (MCSVARHMESIMLFTLLGLCVGLAAG) is a signal peptide. The cysteines at positions 89 and 183 are disulfide-linked.

This sequence belongs to the calycin superfamily. Lipocalin family. 2 different forms with differently processed N-termini exist. As to expression, epididymal fluid of the caudal and corpus regions (at protein level).

It localises to the secreted. In terms of biological role, associates with spermatozoa in the epididymal fluid but does not bind tightly to them. Binds both all-trans and 13-cis retinoic acid. May act as a retinoid carrier protein which is required for epididymal function and/or sperm maturation. This is Epididymal-specific lipocalin-5 from Mus musculus (Mouse).